A 578-amino-acid chain; its full sequence is Proline--tRNA ligase (578 aa).

It belongs to the class-II aminoacyl-tRNA synthetase family. ProS type 1 subfamily. In terms of assembly, homodimer.

It is found in the cytoplasm. The catalysed reaction is tRNA(Pro) + L-proline + ATP = L-prolyl-tRNA(Pro) + AMP + diphosphate. Its function is as follows. Catalyzes the attachment of proline to tRNA(Pro) in a two-step reaction: proline is first activated by ATP to form Pro-AMP and then transferred to the acceptor end of tRNA(Pro). As ProRS can inadvertently accommodate and process non-cognate amino acids such as alanine and cysteine, to avoid such errors it has two additional distinct editing activities against alanine. One activity is designated as 'pretransfer' editing and involves the tRNA(Pro)-independent hydrolysis of activated Ala-AMP. The other activity is designated 'posttransfer' editing and involves deacylation of mischarged Ala-tRNA(Pro). The misacylated Cys-tRNA(Pro) is not edited by ProRS. In Brachyspira hyodysenteriae (strain ATCC 49526 / WA1), this protein is Proline--tRNA ligase.